Here is a 590-residue protein sequence, read N- to C-terminus: Complement component C8 beta chain (590 aa).

Positions 1–32 (MKKSWTWTWRVPAELLLLCAALGCLCVPGSRS) are cleaved as a signal peptide. Residues 33-54 (ERPRSLEPTVVNRSLAKSRHSR) constitute a propeptide that is removed on maturation. Asn-44 is a glycosylation site (N-linked (GlcNAc...) asparagine). A TSP type-1 1 domain is found at 64 to 117 (DCELSSWSSWTMCDPCQKKRYRHAYLLRPSQFNGEPCNFSDKEVEDCATSRPCR). 7 disulfide bridges follow: Cys-65-Cys-100, Cys-76-Cys-110, Cys-79-Cys-116, Cys-122-Cys-133, Cys-127-Cys-146, Cys-140-Cys-155, and Cys-162-Cys-200. 2 C-linked (Man) tryptophan glycosylation sites follow: Trp-70 and Trp-73. A glycan (N-linked (GlcNAc...) asparagine) is linked at Asn-101. The LDL-receptor class A domain maps to 120–157 (VRCEGFVCAQTGRCVNRRLLCNGDNDCGDQSDEANCRK). Ca(2+)-binding residues include Leu-138, Asn-141, Asp-143, Asp-145, Asp-151, and Glu-152. Residues 158 to 504 (IYKKCHHEME…EFQGEVSPCR (347 aa)) enclose the MACPF domain. A run of 4 beta stranded transmembrane segments spans residues 252–259 (STFNLGFK), 262–269 (SIFEFGIN), 379–386 (AKNDFKLG), and 392–399 (VYVSLGVS). Residues Cys-378 and Cys-403 are joined by a disulfide bond. Residue Thr-418 is modified to Phosphothreonine. Disulfide bonds link Cys-503–Cys-550, Cys-505–Cys-521, Cys-508–Cys-523, and Cys-525–Cys-534. The EGF-like domain maps to 505–535 (CAPCQGNGVPVQKGSRCDCICPVGFQGSACE). Residues 545–588 (DGRWSCWSRWSSCSGGQKTRRRQCNNPAPQDGGSPCSGPASETL) form the TSP type-1 2 domain. 2 C-linked (Man) tryptophan glycosylation sites follow: Trp-551 and Trp-554. A disulfide bridge connects residues Cys-557 and Cys-590. The tract at residues 557–590 (CSGGQKTRRRQCNNPAPQDGGSPCSGPASETLAC) is disordered.

Belongs to the complement C6/C7/C8/C9 family. In terms of assembly, heterotrimer of 3 chains: alpha (C8A), beta (C8B) and gamma (C8G); the alpha and gamma chains are disulfide bonded. Component of the membrane attack complex (MAC), composed of complement C5b, C6, C7, C8A, C8B, C8G and multiple copies of the pore-forming subunit C9. N-glycosylated; contains one or two bound glycans. Not O-glycosylated.

It is found in the secreted. The protein localises to the target cell membrane. Membrane attack complex (MAC) assembly is inhibited by CD59, thereby protecting self-cells from damage during complement activation. CD59 acts by binding to the beta-haipins of C8 (C8A and C8B), forming an intermolecular beta-sheet that prevents incorporation of the multiple copies of C9 required for complete formation of the osmolytic pore. MAC assembly is also inhibited by clusterin (CLU) chaperones that inhibit polymerization of C9. In terms of biological role, component of the membrane attack complex (MAC), a multiprotein complex activated by the complement cascade, which inserts into a target cell membrane and forms a pore, leading to target cell membrane rupture and cell lysis. The MAC is initiated by proteolytic cleavage of C5 into complement C5b in response to the classical, alternative, lectin and GZMK complement pathways. The complement pathways consist in a cascade of proteins that leads to phagocytosis and breakdown of pathogens and signaling that strengthens the adaptive immune system. C8B, together with C8A and C8G, inserts into the target membrane, but does not form pores by itself. During MAC assembly, associates with C5b, C6 and C7 to form the C5b8 intermediate complex that inserts into the target membrane and traverses the bilayer increasing membrane rigidity. The protein is Complement component C8 beta chain (C8B) of Oryctolagus cuniculus (Rabbit).